Consider the following 155-residue polypeptide: DNA gyrase inhibitor (155 aa).

The protein belongs to the DNA gyrase inhibitor family. In terms of assembly, interacts with DNA gyrase.

It is found in the cytoplasm. Inhibits the supercoiling activity of DNA gyrase. Acts by inhibiting DNA gyrase at an early step, prior to (or at the step of) binding of DNA by the gyrase. It protects cells against toxins that target DNA gyrase, by inhibiting activity of these toxins and reducing the formation of lethal double-strand breaks in the cell. This is DNA gyrase inhibitor from Erwinia billingiae (strain Eb661).